A 286-amino-acid polypeptide reads, in one-letter code: Merozoite surface protein 2 (286 aa).

A signal peptide spans 1–20 (MKVIKTLSIINFFIFVTFNI). N22 and N36 each carry an N-linked (GlcNAc...) asparagine glycan. A disordered region spans residues 43 to 248 (MTESKTPTPT…SQKECTDGNK (206 aa)). Residues 44-212 (TESKTPTPTG…EQTESPELQS (169 aa)) are polymorphic region. Positions 54–68 (AGAGASGSAGSGDGA) are enriched in gly residues. The stretch at 59–68 (SGSAGSGDGA) is repeat 1. The segment at 59 to 106 (SGSAGSGDGASGSASGSASGSASGSAGASGSASGSAGASGSASGSAGA) is 5 X 10 AA tandem repeats of S-G-S-A-[GS]-[GS]-[AD]-G-A. A 2; partial repeat occupies 69 to 76 (SGSASGSA). The segment covering 69–137 (SGSASGSASG…STSTSSENPN (69 aa)) has biased composition (low complexity). 3 repeat units span residues 77–86 (SGSASGSAGA), 88–96 (GSASGSAGA), and 97–106 (SGSASGSAGA). Composition is skewed to polar residues over residues 153–179 (KPNQANKETQNNSNVQQDSQTKSNVPP) and 186–214 (KSPTAQPEQAENSAPTAEQTESPELQSAP). An N-linked (GlcNAc...) asparagine glycan is attached at N163. N235 carries an N-linked (GlcNAc...) asparagine glycan. Over residues 239 to 248 (SQKECTDGNK) the composition is skewed to basic and acidic residues. C243 and C251 form a disulfide bridge. Residues N259 and N260 are each glycosylated (N-linked (GlcNAc...) asparagine). N260 carries the GPI-anchor amidated asparagine lipid modification. Positions 261-286 (SSNIASINKFVVLISATLVLSFAIFI) are cleaved as a propeptide — removed in mature form.

The protein resides in the cell membrane. In terms of biological role, may play a role in the merozoite attachment to the erythrocyte. The sequence is that of Merozoite surface protein 2 from Plasmodium falciparum (isolate 311).